A 356-amino-acid chain; its full sequence is Tyrosine recombinase XerS (356 aa).

A Core-binding (CB) domain is found at 16 to 121; it reads IMPWYVLDYY…ALSSLYKYLT (106 aa). The Tyr recombinase domain maps to 169-354; it reads AFLDYVDKEY…VNDEQKNALD (186 aa). Residues Arg-210, Lys-234, His-306, Arg-309, and His-332 contribute to the active site. Catalysis depends on Tyr-341, which acts as the O-(3'-phospho-DNA)-tyrosine intermediate.

This sequence belongs to the 'phage' integrase family. XerS subfamily.

It localises to the cytoplasm. With respect to regulation, ftsK is required for recombination. Its function is as follows. Site-specific tyrosine recombinase, which acts by catalyzing the cutting and rejoining of the recombining DNA molecules. Essential to convert dimers of the bacterial chromosome into monomers to permit their segregation at cell division. This Streptococcus equi subsp. equi (strain 4047) protein is Tyrosine recombinase XerS.